The following is a 364-amino-acid chain: Ribosomal RNA large subunit methyltransferase F (364 aa).

Residues 1–30 (MTNKRKSAKPLEPAKRAPKPRTKKSRDLSA) form a disordered region.

The protein belongs to the methyltransferase superfamily. METTL16/RlmF family.

It localises to the cytoplasm. It carries out the reaction adenosine(1618) in 23S rRNA + S-adenosyl-L-methionine = N(6)-methyladenosine(1618) in 23S rRNA + S-adenosyl-L-homocysteine + H(+). Its function is as follows. Specifically methylates the adenine in position 1618 of 23S rRNA. The polypeptide is Ribosomal RNA large subunit methyltransferase F (Vibrio vulnificus (strain CMCP6)).